Here is a 417-residue protein sequence, read N- to C-terminus: Serine hydroxymethyltransferase (417 aa).

(6S)-5,6,7,8-tetrahydrofolate contacts are provided by residues Leu-121 and 125 to 127 (GHL). Residue Lys-229 is modified to N6-(pyridoxal phosphate)lysine. 355-357 (SPF) is a (6S)-5,6,7,8-tetrahydrofolate binding site.

This sequence belongs to the SHMT family. Homodimer. The cofactor is pyridoxal 5'-phosphate.

The protein localises to the cytoplasm. The catalysed reaction is (6R)-5,10-methylene-5,6,7,8-tetrahydrofolate + glycine + H2O = (6S)-5,6,7,8-tetrahydrofolate + L-serine. It participates in one-carbon metabolism; tetrahydrofolate interconversion. It functions in the pathway amino-acid biosynthesis; glycine biosynthesis; glycine from L-serine: step 1/1. In terms of biological role, catalyzes the reversible interconversion of serine and glycine with tetrahydrofolate (THF) serving as the one-carbon carrier. This reaction serves as the major source of one-carbon groups required for the biosynthesis of purines, thymidylate, methionine, and other important biomolecules. Also exhibits THF-independent aldolase activity toward beta-hydroxyamino acids, producing glycine and aldehydes, via a retro-aldol mechanism. In Erwinia tasmaniensis (strain DSM 17950 / CFBP 7177 / CIP 109463 / NCPPB 4357 / Et1/99), this protein is Serine hydroxymethyltransferase.